The chain runs to 929 residues: Type I restriction enzyme SauCOLORF180P endonuclease subunit (929 aa).

Residues 254-418 (QQATETGNNG…DGRTTADIFG (165 aa)) enclose the Helicase ATP-binding domain. 268–274 (TTGSGKT) contributes to the ATP binding site.

Belongs to the HsdR family. In terms of assembly, the type I restriction/modification system is composed of three polypeptides R, M and S.

It catalyses the reaction Endonucleolytic cleavage of DNA to give random double-stranded fragments with terminal 5'-phosphates, ATP is simultaneously hydrolyzed.. Its function is as follows. The restriction (R) subunit of a type I restriction enzyme that recognizes an undetermined sequence and cleaves a random distance away. Subunit R is required for both nuclease and ATPase activities, but not for modification. After locating a non-methylated recognition site, the enzyme complex serves as a molecular motor that translocates DNA in an ATP-dependent manner until a collision occurs that triggers cleavage. This chain is Type I restriction enzyme SauCOLORF180P endonuclease subunit, found in Staphylococcus aureus (strain COL).